Reading from the N-terminus, the 129-residue chain is Lysozyme C (129 aa).

The 129-residue stretch at Lys1–Leu129 folds into the C-type lysozyme domain. Disulfide bonds link Cys6–Cys127, Cys30–Cys115, Cys64–Cys80, and Cys76–Cys94. Active-site residues include Glu35 and Asp52.

Belongs to the glycosyl hydrolase 22 family. Monomer.

The protein localises to the secreted. It catalyses the reaction Hydrolysis of (1-&gt;4)-beta-linkages between N-acetylmuramic acid and N-acetyl-D-glucosamine residues in a peptidoglycan and between N-acetyl-D-glucosamine residues in chitodextrins.. Its function is as follows. Lysozymes have primarily a bacteriolytic function; those in tissues and body fluids are associated with the monocyte-macrophage system and enhance the activity of immunoagents. The protein is Lysozyme C (LYZ) of Ortalis vetula (Plain chachalaca).